A 232-amino-acid polypeptide reads, in one-letter code: Ribose-5-phosphate isomerase A (232 aa).

Residues 28-31 (TGST), 83-86 (DGAD), and 96-99 (KGGG) each bind substrate. The active-site Proton acceptor is glutamate 105. Residue lysine 123 coordinates substrate.

It belongs to the ribose 5-phosphate isomerase family. As to quaternary structure, homodimer.

It catalyses the reaction aldehydo-D-ribose 5-phosphate = D-ribulose 5-phosphate. It functions in the pathway carbohydrate degradation; pentose phosphate pathway; D-ribose 5-phosphate from D-ribulose 5-phosphate (non-oxidative stage): step 1/1. In terms of biological role, catalyzes the reversible conversion of ribose-5-phosphate to ribulose 5-phosphate. The chain is Ribose-5-phosphate isomerase A from Nitrobacter hamburgensis (strain DSM 10229 / NCIMB 13809 / X14).